The primary structure comprises 514 residues: 2,3-bisphosphoglycerate-independent phosphoglycerate mutase (514 aa).

The Mn(2+) site is built by aspartate 14 and serine 64. The Phosphoserine intermediate role is filled by serine 64. Substrate contacts are provided by residues histidine 125, arginine 155–aspartate 156, arginine 187, arginine 193, arginine 263–arginine 266, and lysine 337. Mn(2+) contacts are provided by aspartate 404, histidine 408, aspartate 445, histidine 446, and histidine 463.

This sequence belongs to the BPG-independent phosphoglycerate mutase family. As to quaternary structure, monomer. It depends on Mn(2+) as a cofactor.

The enzyme catalyses (2R)-2-phosphoglycerate = (2R)-3-phosphoglycerate. It participates in carbohydrate degradation; glycolysis; pyruvate from D-glyceraldehyde 3-phosphate: step 3/5. Its function is as follows. Catalyzes the interconversion of 2-phosphoglycerate and 3-phosphoglycerate. The polypeptide is 2,3-bisphosphoglycerate-independent phosphoglycerate mutase (Hahella chejuensis (strain KCTC 2396)).